The primary structure comprises 233 residues: Large ribosomal subunit protein uL1 (233 aa).

This sequence belongs to the universal ribosomal protein uL1 family. Part of the 50S ribosomal subunit.

Functionally, binds directly to 23S rRNA. The L1 stalk is quite mobile in the ribosome, and is involved in E site tRNA release. In terms of biological role, protein L1 is also a translational repressor protein, it controls the translation of the L11 operon by binding to its mRNA. The sequence is that of Large ribosomal subunit protein uL1 from Photobacterium profundum (strain SS9).